Reading from the N-terminus, the 500-residue chain is METKLPPASTPTSPSSPGLSPVPPADKVDGFSRRSLRRARPRRSHSSSQFRYQSNQQELTPLPLLKDVPASELHDLLSRKLAQCGVMFDFLDCVADLKGKEVKRAALNELVECVGSTRGVLIEPVYPDIIRMISVNIFRTLPPSENPEFDPEEDEPNLEPSWPHLQLVYEFFLRFLESPDFQPSVAKRYVDQKFVLMLLELFDSEDPREREYLKTILHRVYGKFLGLRAYIRKQCNHIFLRFIYEFEHFNGVAELLEILGSIINGFALPLKTEHKQFLVRVLIPLHSVKSLSVFHAQLAYCVVQFLEKDATLTEHVIRGLLKYWPKTCTQKEVMFLGEVEEILDVIEPSQFVKIQEPLFKQVARCVSSPHFQVAERALYFWNNEYILSLIEDNCHTVLPAVFGTLYQVSKEHWNQTIVSLIYNVLKTFMEMNGKLFDELTASYKLEKQQEQQKARERQELWQGLEELRLRRLQGTQGTQGAREAPLQRFVPQVAATGGQS.

The span at 1 to 19 (METKLPPASTPTSPSSPGL) shows a compositional bias: low complexity. Disordered regions lie at residues 1–55 (METK…YQSN) and 474–500 (GTQG…GGQS). Phosphoserine; by CLK2 is present on residues serine 32, serine 35, serine 44, serine 46, serine 47, and serine 48. Over residues 34–45 (RSLRRARPRRSH) the composition is skewed to basic residues.

It belongs to the phosphatase 2A regulatory subunit B56 family. As to quaternary structure, component of the serine/threonine-protein phosphatase 2A complex (PP2A). This complex consists of a common heterodimeric core enzyme, composed of a 36 kDa catalytic subunit (subunit C) and a 65 kDa constant scaffold subunit (PR65 or subunit A), that associates with a variety of regulatory subunits. Proteins that associate with the core dimer include three families of regulatory subunits B (the R2/B/PR55/B55, R3/B''/PR72/PR130/PR59 and R5/B'/B56 families), the 48 kDa variable regulatory subunit, viral proteins, and cell signaling molecules. Interacts with SGO1. Interacts with AKT1. As to expression, highly expressed in brain.

The protein localises to the nucleus. Functionally, as the regulatory component of the serine/threonine-protein phosphatase 2A (PP2A) holoenzyme, modulates substrate specificity, subcellular localization, and responsiveness to phosphorylation. The phosphorylated form mediates the interaction between PP2A and AKT1, leading to AKT1 dephosphorylation. This Oryctolagus cuniculus (Rabbit) protein is Serine/threonine-protein phosphatase 2A 56 kDa regulatory subunit beta isoform (PPP2R5B).